The chain runs to 322 residues: Stage V sporulation protein K (322 aa).

G99–T106 contacts ATP.

It belongs to the CbxX/CfxQ family.

The protein is Stage V sporulation protein K (spoVK) of Bacillus subtilis (strain 168).